Consider the following 322-residue polypeptide: Elongation factor Ts, mitochondrial (322 aa).

The protein belongs to the EF-Ts family.

Its subcellular location is the mitochondrion. Its function is as follows. Associates with the EF-Tu.GDP complex and induces the exchange of GDP to GTP. It remains bound to the aminoacyl-tRNA.EF-Tu.GTP complex up to the GTP hydrolysis stage on the ribosome. The chain is Elongation factor Ts, mitochondrial from Chlamydomonas reinhardtii (Chlamydomonas smithii).